Reading from the N-terminus, the 147-residue chain is Small ribosomal subunit protein uS12 (147 aa).

This sequence belongs to the universal ribosomal protein uS12 family. Part of the 30S ribosomal subunit.

With S4 and S5 plays an important role in translational accuracy. Located at the interface of the 30S and 50S subunits. This Sulfolobus acidocaldarius (strain ATCC 33909 / DSM 639 / JCM 8929 / NBRC 15157 / NCIMB 11770) protein is Small ribosomal subunit protein uS12.